Here is a 206-residue protein sequence, read N- to C-terminus: Small ribosomal subunit protein uS4 (206 aa).

Residues 25–39 are compositionally biased toward basic and acidic residues; it reads DKLLDRKPNGPGKER. Residues 25–49 form a disordered region; it reads DKLLDRKPNGPGKERGARKRGKTSV. Residues 95–157 enclose the S4 RNA-binding domain; it reads QRLDNTIYRM…KGIQNLIRHN (63 aa).

This sequence belongs to the universal ribosomal protein uS4 family. Part of the 30S ribosomal subunit. Contacts protein S5. The interaction surface between S4 and S5 is involved in control of translational fidelity.

One of the primary rRNA binding proteins, it binds directly to 16S rRNA where it nucleates assembly of the body of the 30S subunit. Functionally, with S5 and S12 plays an important role in translational accuracy. The polypeptide is Small ribosomal subunit protein uS4 (Treponema denticola (strain ATCC 35405 / DSM 14222 / CIP 103919 / JCM 8153 / KCTC 15104)).